The sequence spans 241 residues: Sensory transduction protein LytT (241 aa).

A Response regulatory domain is found at 3–117 (RVLIVDDEML…RIQQTLKKYK (115 aa)). Position 54 is a 4-aspartylphosphate (aspartate 54). Residues 137-241 (LALSVGESIV…AKELKKLLHI (105 aa)) form the HTH LytTR-type domain.

Post-translationally, phosphorylated by LytS.

Its subcellular location is the cytoplasm. In terms of biological role, member of the two-component regulatory system LytS/LytT that probably regulates genes involved in cell wall metabolism. The sequence is that of Sensory transduction protein LytT (lytT) from Bacillus subtilis (strain 168).